The chain runs to 147 residues: Thyrotropin subunit beta (147 aa).

Residues 1 to 20 (MELSVAMYGLLCLLFSQAVP) form the signal peptide. 6 disulfide bridges follow: Cys22/Cys72, Cys36/Cys87, Cys39/Cys127, Cys47/Cys103, Cys51/Cys105, and Cys108/Cys115. N-linked (GlcNAc...) asparagine glycosylation occurs at Asn43.

The protein belongs to the glycoprotein hormones subunit beta family. Heterodimer of a common alpha chain and a unique beta chain which confers biological specificity to thyrotropin, lutropin, follitropin and gonadotropin. As to expression, pituitary gland. Higher levels seen in immature fishes than the mature fishes.

The protein resides in the secreted. In terms of biological role, indispensable for the control of thyroid structure and metabolism. May play some role in the biological processes of the immature fishes. The protein is Thyrotropin subunit beta (tshb) of Oncorhynchus mykiss (Rainbow trout).